We begin with the raw amino-acid sequence, 27 residues long: Voltage-dependent anion-selective channel protein (27 aa).

Belongs to the eukaryotic mitochondrial porin family. As to quaternary structure, interacts with hexokinases. Photoreceptors.

Its subcellular location is the mitochondrion outer membrane. Functionally, forms a channel through the cell membrane that allows diffusion of small hydrophilic molecules. This Doryteuthis pealeii (Longfin inshore squid) protein is Voltage-dependent anion-selective channel protein.